Consider the following 149-residue polypeptide: Transcriptional regulator MraZ (149 aa).

2 consecutive SpoVT-AbrB domains span residues 7-54 (KYVN…GISH) and 83-126 (AVQL…QPQN).

The protein belongs to the MraZ family. In terms of assembly, forms oligomers.

The protein resides in the cytoplasm. Its subcellular location is the nucleoid. The protein is Transcriptional regulator MraZ of Rickettsia felis (strain ATCC VR-1525 / URRWXCal2) (Rickettsia azadi).